Reading from the N-terminus, the 49-residue chain is Astexin-3 (49 aa).

A propeptide spanning residues 1 to 25 (MRTYNRSLPARAGLTDLGKVTTHTK) is cleaved from the precursor. Residues 26–34 (GPTPMVGLD) constitute a cross-link (isoaspartyl glycine isopeptide (Gly-Asp)).

In terms of processing, this lasso peptide is hydrolyzed to a linear form by the isopeptidase AtxE2, in vitro. The isopeptidase AtxE2 only recognizes the threaded form (but not the unthreaded form).

Its subcellular location is the cytoplasm. The protein resides in the secreted. Its function is as follows. Shows weak antimicrobial activity against its phylogenetic relative Caulobacter crescentus. Does not show activity against other bacteria tested (E.coli, Vibrio sp, Burkhoderia thailandensis, and Salmonella newport). The polypeptide is Astexin-3 (Asticcacaulis excentricus (strain ATCC 15261 / DSM 4724 / KCTC 12464 / NCIMB 9791 / VKM B-1370 / CB 48)).